Reading from the N-terminus, the 270-residue chain is MVFARVNEADVTEAILDGFYSSLKKHLRSDVIVVGAGPAGLTAAWRLAEAGARVLIVEQNNYLGGGLWLGGYFMNPVTIRAPAQRILDELEVPYEAVKPGLYRTKGPLLAAKLAARALEAGAEVLNLTMLDDVIVENSRVAGVVVNWSPVQGLPRQITCVDPVGLRAEYVVDATGHDAVVTRKLAERGMVEASKLGPMWVERSEDLVVEKTGEVYPGLVVAGIAVAEVYGLPRMGPTFGAMLLSGEKAAALIGEKLGLKVKVAAAPASQA.

NAD(+)-binding positions include alanine 39, 58 to 59 (EQ), glycine 66, and leucine 130. Cysteine 159 carries the 2,3-didehydroalanine (Cys) modification. NAD(+) is bound at residue aspartate 161. Aspartate 161 and histidine 176 together coordinate Fe cation. NAD(+) is bound at residue isoleucine 223. Arginine 233 contacts glycine.

It belongs to the THI4 family. Homooctamer; tetramer of dimers. Fe(2+) serves as cofactor. In terms of processing, during the catalytic reaction, a sulfide is transferred from Cys-159 to a reaction intermediate, generating a dehydroalanine residue.

The enzyme catalyses [ADP-thiazole synthase]-L-cysteine + glycine + NAD(+) = [ADP-thiazole synthase]-dehydroalanine + ADP-5-ethyl-4-methylthiazole-2-carboxylate + nicotinamide + 3 H2O + 2 H(+). It functions in the pathway cofactor biosynthesis; thiamine diphosphate biosynthesis. Its function is as follows. Involved in biosynthesis of the thiamine precursor thiazole. Catalyzes the conversion of NAD and glycine to adenosine diphosphate 5-(2-hydroxyethyl)-4-methylthiazole-2-carboxylic acid (ADT), an adenylated thiazole intermediate. The reaction includes an iron-dependent sulfide transfer from a conserved cysteine residue of the protein to a thiazole intermediate. The enzyme can only undergo a single turnover, which suggests it is a suicide enzyme. This is Thiamine thiazole synthase from Aeropyrum pernix (strain ATCC 700893 / DSM 11879 / JCM 9820 / NBRC 100138 / K1).